We begin with the raw amino-acid sequence, 616 residues long: Dihydroxy-acid dehydratase (616 aa).

D81 contributes to the Mg(2+) binding site. A [2Fe-2S] cluster-binding site is contributed by C122. Mg(2+)-binding residues include D123 and K124. K124 bears the N6-carboxylysine mark. C196 lines the [2Fe-2S] cluster pocket. E496 contributes to the Mg(2+) binding site. S522 (proton acceptor) is an active-site residue.

This sequence belongs to the IlvD/Edd family. Homodimer. Requires [2Fe-2S] cluster as cofactor. Mg(2+) serves as cofactor.

The enzyme catalyses (2R)-2,3-dihydroxy-3-methylbutanoate = 3-methyl-2-oxobutanoate + H2O. The catalysed reaction is (2R,3R)-2,3-dihydroxy-3-methylpentanoate = (S)-3-methyl-2-oxopentanoate + H2O. It participates in amino-acid biosynthesis; L-isoleucine biosynthesis; L-isoleucine from 2-oxobutanoate: step 3/4. The protein operates within amino-acid biosynthesis; L-valine biosynthesis; L-valine from pyruvate: step 3/4. Its function is as follows. Functions in the biosynthesis of branched-chain amino acids. Catalyzes the dehydration of (2R,3R)-2,3-dihydroxy-3-methylpentanoate (2,3-dihydroxy-3-methylvalerate) into 2-oxo-3-methylpentanoate (2-oxo-3-methylvalerate) and of (2R)-2,3-dihydroxy-3-methylbutanoate (2,3-dihydroxyisovalerate) into 2-oxo-3-methylbutanoate (2-oxoisovalerate), the penultimate precursor to L-isoleucine and L-valine, respectively. In Streptomyces griseus subsp. griseus (strain JCM 4626 / CBS 651.72 / NBRC 13350 / KCC S-0626 / ISP 5235), this protein is Dihydroxy-acid dehydratase.